The following is an 843-amino-acid chain: RNA-binding protein 25 (843 aa).

The interval 1–30 (MSFPPHLNRPPMGIPALPPGIPPPQFPGFP) is disordered. Pro residues predominate over residues 12-30 (MGIPALPPGIPPPQFPGFP). An RRM domain is found at 87 to 164 (TTVFVGNISE…KKLLVKVDAK (78 aa)). Lys-135 is modified (N6-acetyllysine). 2 disordered regions span residues 171–202 (EWKA…ETKR) and 219–243 (SSEL…KKED). 2 positions are modified to phosphoserine: Ser-226 and Ser-229. Residues Lys-261, Lys-273, and Lys-430 each participate in a glycyl lysine isopeptide (Lys-Gly) (interchain with G-Cter in SUMO2) cross-link. Basic and acidic residues-rich tracts occupy residues 280 to 433 (EISK…KRDR) and 521 to 573 (RLRD…ERRR). 2 disordered regions span residues 280–442 (EISK…DAYE) and 498–688 (EFLE…KRKK). The tract at residues 285 to 644 (RDTHKKLEEE…PNTPGDESPC (360 aa)) is necessary for nuclear speckle localization. Residue Lys-578 forms a Glycyl lysine isopeptide (Lys-Gly) (interchain with G-Cter in SUMO2) linkage. Ser-583 is subject to Phosphoserine. Residues 590–599 (KQEKEEKREE) are compositionally biased toward basic and acidic residues. Positions 621–630 (SSAPSVSSAS) are enriched in low complexity. A Glycyl lysine isopeptide (Lys-Gly) (interchain with G-Cter in SUMO2) cross-link involves residue Lys-671. Residues 674–683 (ASNSPGQPNS) show a composition bias toward polar residues. Phosphoserine occurs at positions 677 and 683. Residues Lys-688 and Lys-697 each participate in a glycyl lysine isopeptide (Lys-Gly) (interchain with G-Cter in SUMO2) cross-link. Ser-703 is subject to Phosphoserine. Lys-722 participates in a covalent cross-link: Glycyl lysine isopeptide (Lys-Gly) (interchain with G-Cter in SUMO2). In terms of domain architecture, PWI spans 750–843 (PELFAYPLDW…TEAKKIGLVK (94 aa)).

In terms of assembly, interacts with LUC7L3 and SRRM1. Specifically associates with functional splicing complexes, including Sm proteins and U1, U2, U4, U5 and U6 snRNAs. Associates with exon junction complex (EJC) proteins, including APEX1, DDX39B, NCBP1, RBM8A and RNPS1. Interaction with NCBP1 is RNA-dependent. Sumoylated.

It is found in the nucleus speckle. Its subcellular location is the cytoplasm. Functionally, RNA-binding protein that acts as a regulator of alternative pre-mRNA splicing. Involved in apoptotic cell death through the regulation of the apoptotic factor BCL2L1 isoform expression. Modulates the ratio of proapoptotic BCL2L1 isoform S to antiapoptotic BCL2L1 isoform L mRNA expression. When overexpressed, stimulates proapoptotic BCL2L1 isoform S 5'-splice site (5'-ss) selection, whereas its depletion caused the accumulation of antiapoptotic BCL2L1 isoform L. Promotes BCL2L1 isoform S 5'-ss usage through the 5'-CGGGCA-3' RNA sequence. Its association with LUC7L3 promotes U1 snRNP binding to a weak 5' ss in a 5'-CGGGCA-3'-dependent manner. Binds to the exonic splicing enhancer 5'-CGGGCA-3' RNA sequence located within exon 2 of the BCL2L1 pre-mRNA. Also involved in the generation of an abnormal and truncated splice form of SCN5A in heart failure. This Homo sapiens (Human) protein is RNA-binding protein 25 (RBM25).